Here is a 487-residue protein sequence, read N- to C-terminus: 3-octaprenyl-4-hydroxybenzoate carboxy-lyase (487 aa).

N172 provides a ligand contact to Mn(2+). Residues 175–177 (IYR), 189–191 (RWL), and 194–195 (RG) each bind prenylated FMN. A Mn(2+)-binding site is contributed by E238. D287 acts as the Proton donor in catalysis.

This sequence belongs to the UbiD family. As to quaternary structure, homohexamer. It depends on prenylated FMN as a cofactor. Mn(2+) serves as cofactor.

It is found in the cell membrane. The enzyme catalyses a 4-hydroxy-3-(all-trans-polyprenyl)benzoate + H(+) = a 2-(all-trans-polyprenyl)phenol + CO2. It functions in the pathway cofactor biosynthesis; ubiquinone biosynthesis. Functionally, catalyzes the decarboxylation of 3-octaprenyl-4-hydroxy benzoate to 2-octaprenylphenol, an intermediate step in ubiquinone biosynthesis. This is 3-octaprenyl-4-hydroxybenzoate carboxy-lyase from Blochmanniella pennsylvanica (strain BPEN).